A 569-amino-acid polypeptide reads, in one-letter code: Urease subunit alpha (569 aa).

Positions 131–569 (GGVDAHIHFI…VAMAQRYFLF (439 aa)) constitute a Urease domain. Ni(2+)-binding residues include His136, His138, and Lys219. Lys219 carries the N6-carboxylysine modification. Position 221 (His221) interacts with substrate. The Ni(2+) site is built by His248 and His274. Catalysis depends on His322, which acts as the Proton donor. Residue Asp362 participates in Ni(2+) binding.

It belongs to the metallo-dependent hydrolases superfamily. Urease alpha subunit family. Heterotrimer of UreA (gamma), UreB (beta) and UreC (alpha) subunits. Three heterotrimers associate to form the active enzyme. It depends on Ni cation as a cofactor. Carboxylation allows a single lysine to coordinate two nickel ions.

Its subcellular location is the cytoplasm. The enzyme catalyses urea + 2 H2O + H(+) = hydrogencarbonate + 2 NH4(+). It functions in the pathway nitrogen metabolism; urea degradation; CO(2) and NH(3) from urea (urease route): step 1/1. The sequence is that of Urease subunit alpha from Geobacillus kaustophilus (strain HTA426).